Here is a 192-residue protein sequence, read N- to C-terminus: uncharacterized protein (192 aa).

A signal peptide spans 1–17 (MFKKILFPLVALFMLAG). Cys-18 is lipidated: N-palmitoyl cysteine. Cys-18 carries the S-diacylglycerol cysteine lipid modification.

This sequence to H.influenzae HI_0162.

The protein localises to the cell membrane. This is an uncharacterized protein from Escherichia coli O6:H1 (strain CFT073 / ATCC 700928 / UPEC).